A 445-amino-acid chain; its full sequence is Phosphoglucosamine mutase (445 aa).

The active-site Phosphoserine intermediate is Ser-99. Mg(2+) is bound by residues Ser-99, Asp-242, Asp-244, and Asp-246. A Phosphoserine modification is found at Ser-99.

This sequence belongs to the phosphohexose mutase family. Mg(2+) is required as a cofactor. Activated by phosphorylation.

The enzyme catalyses alpha-D-glucosamine 1-phosphate = D-glucosamine 6-phosphate. In terms of biological role, catalyzes the conversion of glucosamine-6-phosphate to glucosamine-1-phosphate. In Campylobacter jejuni subsp. jejuni serotype O:6 (strain 81116 / NCTC 11828), this protein is Phosphoglucosamine mutase.